We begin with the raw amino-acid sequence, 471 residues long: Tumor necrosis factor receptor superfamily member 1A (471 aa).

The N-terminal stretch at methionine 1–glycine 29 is a signal peptide. At leucine 30–threonine 210 the chain is on the extracellular side. 4 TNFR-Cys repeats span residues proline 43–arginine 82, valine 83–cysteine 125, glycine 126–cysteine 166, and histidine 167–proline 195. Intrachain disulfides connect cysteine 44/cysteine 58, cysteine 59/cysteine 72, cysteine 62/cysteine 81, cysteine 84/cysteine 99, cysteine 102/cysteine 117, cysteine 105/cysteine 125, and cysteine 127/cysteine 143. A glycan (N-linked (GlcNAc...) asparagine) is linked at asparagine 54. N-linked (GlcNAc...) asparagine glycans are attached at residues asparagine 145 and asparagine 151. 5 cysteine pairs are disulfide-bonded: cysteine 146–cysteine 158, cysteine 149–cysteine 166, cysteine 168–cysteine 179, cysteine 182–cysteine 194, and cysteine 185–cysteine 190. The helical transmembrane segment at valine 211–cysteine 233 threads the bilayer. Topologically, residues arginine 234–tryptophan 471 are cytoplasmic. Positions threonine 340 to alanine 360 are N-SMase activation domain (NSD). Positions proline 372 to leucine 457 constitute a Death domain.

In terms of assembly, binding of TNF to the extracellular domain leads to homotrimerization. The aggregated death domains provide a novel molecular interface that interacts specifically with the death domain of TRADD. Various TRADD-interacting proteins such as TRAFS, RIPK1 and possibly FADD, are recruited to the complex by their association with TRADD. This complex activates at least two distinct signaling cascades, apoptosis and NF-kappa-B signaling. Interacts with BAG4, BABAM2, FEM1B, GRB2, SQSTM1 and TRPC4AP. Interacts directly with NOL3 (via CARD domain); inhibits TNF-signaling pathway. Interacts with SH3RF2, TRADD and RIPK1. SH3RF2 facilitates the recruitment of RIPK1 and TRADD to TNFRSF1A in a TNF-alpha-dependent process. Interacts with PGLYRP1; this interaction is important for cell death induction. Interacts (via death domain) with MADD (via death domain).

Its subcellular location is the cell membrane. The protein resides in the golgi apparatus membrane. Receptor for TNFSF2/TNF-alpha and homotrimeric TNFSF1/lymphotoxin-alpha. The adapter molecule FADD recruits caspase-8 to the activated receptor. The resulting death-inducing signaling complex (DISC) performs caspase-8 proteolytic activation which initiates the subsequent cascade of caspases (aspartate-specific cysteine proteases) mediating apoptosis. This is Tumor necrosis factor receptor superfamily member 1A (TNFRSF1A) from Bos taurus (Bovine).